Consider the following 445-residue polypeptide: Trimethylamine monooxygenase (445 aa).

FAD is bound by residues Ser-14, Glu-39, Gln-41, Leu-47, Trp-48, and His-64. NADP(+)-binding residues include Trp-72 and Asn-74. 2 residues coordinate FAD: Asn-74 and Val-127. Residues Thr-204, Ser-205, Ser-207, and Arg-228 each coordinate NADP(+). Gln-317 and Thr-320 together coordinate FAD. Arg-411 lines the NADP(+) pocket.

Belongs to the FMO family. It depends on FAD as a cofactor.

The catalysed reaction is trimethylamine + NADPH + O2 = trimethylamine N-oxide + NADP(+) + H2O. In terms of biological role, catalyzes the oxidation of trimethylamine (TMA) to produce trimethylamine N-oxide (TMAO). In vitro, has a broad substrate specificity, oxidizing many nitrogen- and sulfur-containing compounds, including dimethylamine (DMA), dimethylsulfide (DMS) and dimethylsulfoxide (DMSO). The protein is Trimethylamine monooxygenase of Roseovarius sp. (strain 217).